The chain runs to 131 residues: mRNA stability protein IGO2 (131 aa).

Residues 1–13 (MSEDLSPTSSRVD) show a composition bias toward polar residues. The interval 1–26 (MSEDLSPTSSRVDLSNPHGFTKEGVD) is disordered. Serine 2 carries the post-translational modification N-acetylserine. Phosphoserine is present on residues serine 6, serine 63, serine 108, and serine 119. The disordered stretch occupies residues 81–131 (VNNSSNNLPVTNPSGLRESIIRRRMSSSSGGDSISRQGSISSGPPPRSPNK). Low complexity predominate over residues 106-122 (SSSSGGDSISRQGSISS).

This sequence belongs to the endosulfine family. In terms of processing, phosphorylated by RIM15.

The protein localises to the cytoplasm. It localises to the nucleus. Its function is as follows. Required for TORC1 to properly control gene expression and chronological life span. Plays an essential role in initiation of the G0 program by preventing the degradation of specific nutrient-regulated mRNAs via the 5'-3' mRNA decay pathway. The polypeptide is mRNA stability protein IGO2 (IGO2) (Saccharomyces cerevisiae (strain ATCC 204508 / S288c) (Baker's yeast)).